A 315-amino-acid polypeptide reads, in one-letter code: Homoserine O-succinyltransferase (315 aa).

The active-site Acyl-thioester intermediate is the cysteine 142. 2 residues coordinate substrate: lysine 163 and serine 192. The active-site Proton acceptor is the histidine 235. Residue glutamate 237 is part of the active site. Residue arginine 249 coordinates substrate. The segment covering 249 to 258 (RDCEKSDNAP) has biased composition (basic and acidic residues). Residues 249 to 271 (RDCEKSDNAPKPENYFPDDDATK) form a disordered region.

Belongs to the MetA family.

It localises to the cytoplasm. The enzyme catalyses L-homoserine + succinyl-CoA = O-succinyl-L-homoserine + CoA. The protein operates within amino-acid biosynthesis; L-methionine biosynthesis via de novo pathway; O-succinyl-L-homoserine from L-homoserine: step 1/1. Transfers a succinyl group from succinyl-CoA to L-homoserine, forming succinyl-L-homoserine. The polypeptide is Homoserine O-succinyltransferase (Pseudoalteromonas translucida (strain TAC 125)).